A 350-amino-acid chain; its full sequence is FAD:protein FMN transferase (350 aa).

An N-terminal signal peptide occupies residues 1–19; the sequence is MKMTFCRAVCLAAAFLLMG. C20 carries N-palmitoyl cysteine lipidation. The S-diacylglycerol cysteine moiety is linked to residue C20. Residues M41, Y78, 119-121, and D181 contribute to the FAD site; that span reads AMD. T184 is a Mg(2+) binding site. Positions 187 and 272 each coordinate FAD. Positions 298, 301, and 302 each coordinate Mg(2+).

This sequence belongs to the ApbE family. Homodimer. Requires Mg(2+) as cofactor.

Its subcellular location is the cell inner membrane. It catalyses the reaction L-threonyl-[protein] + FAD = FMN-L-threonyl-[protein] + AMP + H(+). Flavin transferase that catalyzes the transfer of the FMN moiety of FAD and its covalent binding to the hydroxyl group of a threonine residue in a target flavoprotein such as NqrB and NqrC, two subunits of the NQR complex. This is FAD:protein FMN transferase from Salmonella typhimurium (strain LT2 / SGSC1412 / ATCC 700720).